The sequence spans 198 residues: NAD(P)H quinone oxidoreductase PST1 (198 aa).

The Flavodoxin-like domain occupies 6 to 192 (VAIIIYSLYH…AIAKQQGEDF (187 aa)). Residues 12–16 (SLYHH) and 112–164 (VFVW…SPWG) contribute to the FMN site.

It belongs to the WrbA family. Requires FMN as cofactor.

The protein resides in the cell membrane. It catalyses the reaction a quinone + NADH + H(+) = a quinol + NAD(+). The catalysed reaction is a quinone + NADPH + H(+) = a quinol + NADP(+). Flavodoxin-like protein (FLP) that plays a role in cell wall integrity, oxidative stress protection and virulence. FLPs act as NAD(P)H quinone oxidoreductases. Reduces ubiquinone (coenzyme Q), enabling it to serve as an antioxidant in the membrane. The sequence is that of NAD(P)H quinone oxidoreductase PST1 from Candida albicans (strain SC5314 / ATCC MYA-2876) (Yeast).